A 469-amino-acid chain; its full sequence is Keratin, type I cytoskeletal 26 (469 aa).

The interval 1–82 (MSFRLSSGSR…ENEHGLLPGN (82 aa)) is head. The tract at residues 83–118 (EKVTLQNLNDRLASYLDHVCTLEEANADLEQKIKGW) is coil 1A. The region spanning 83-398 (EKVTLQNLND…KLIDGEGRKS (316 aa)) is the IF rod domain. The segment at 119 to 140 (YEKYGPGSGRQLAYDCSKYFSV) is linker 1. The coil 1B stretch occupies residues 141 to 232 (TEDLKRQIIS…KNHQEEMKVM (92 aa)). Positions 233–255 (QGAAGGNVNVEINAAPGVDLTVL) are linker 12. A coil 2 region spans residues 256–394 (LNNMRAEYED…EMYCKLIDGE (139 aa)). Positions 395–465 (GRKSKSTYCK…NITMEQRLPS (71 aa)) are tail. Disordered regions lie at residues 398–421 (SKST…KDSK) and 450–469 (KSSK…KVPQ). Residues 405–421 (SEGRGPKNSENQVKDSK) show a composition bias toward basic and acidic residues.

Belongs to the intermediate filament family. As to quaternary structure, heterotetramer of two type I and two type II keratins.

In Bos taurus (Bovine), this protein is Keratin, type I cytoskeletal 26.